The primary structure comprises 181 residues: Peptidyl-tRNA hydrolase (181 aa).

Tyr-14 provides a ligand contact to tRNA. Residue His-19 is the Proton acceptor of the active site. Tyr-62, Asn-64, and Asn-108 together coordinate tRNA.

This sequence belongs to the PTH family. Monomer.

The protein resides in the cytoplasm. The catalysed reaction is an N-acyl-L-alpha-aminoacyl-tRNA + H2O = an N-acyl-L-amino acid + a tRNA + H(+). Hydrolyzes ribosome-free peptidyl-tRNAs (with 1 or more amino acids incorporated), which drop off the ribosome during protein synthesis, or as a result of ribosome stalling. In terms of biological role, catalyzes the release of premature peptidyl moieties from peptidyl-tRNA molecules trapped in stalled 50S ribosomal subunits, and thus maintains levels of free tRNAs and 50S ribosomes. The chain is Peptidyl-tRNA hydrolase from Campylobacter jejuni (strain RM1221).